An 882-amino-acid chain; its full sequence is DNA mismatch repair protein MutS (882 aa).

635 to 642 (GPNMGGKS) is a binding site for ATP.

This sequence belongs to the DNA mismatch repair MutS family.

Its function is as follows. This protein is involved in the repair of mismatches in DNA. It is possible that it carries out the mismatch recognition step. This protein has a weak ATPase activity. This Janthinobacterium sp. (strain Marseille) (Minibacterium massiliensis) protein is DNA mismatch repair protein MutS.